Consider the following 239-residue polypeptide: RNA-binding protein 38 (239 aa).

Positions 34–111 (TKIFVGGLPY…RKANVNLAYL (78 aa)) constitute an RRM domain.

The protein belongs to the RBM38 family.

The protein localises to the cytoplasm. Its subcellular location is the cytosol. The protein resides in the nucleus. Functionally, RNA-binding protein that specifically bind the 3'-UTR of CDKN1A transcripts, leading to maintain the stability of CDKN1A transcripts, thereby acting as a mediator of the p53/TP53 family to regulate CDKN1A. CDKN1A is a cyclin-dependent kinase inhibitor transcriptionally regulated by the p53/TP53 family to induce cell cycle arrest. Isoform 1, but not isoform 2, has the ability to induce cell cycle arrest in G1 and maintain the stability of CDKN1A transcripts induced by p53/TP53. Also acts as a mRNA splicing factor. Specifically regulates the expression of FGFR2-IIIb, an epithelial cell-specific isoform of FGFR2. Plays a role in myogenic differentiation. Its function is as follows. (Microbial infection) Essential factor for the splicing of the pre-mRNAs of human parvovirus B19 (B19V) and for the expression of B19V 11-kDa protein, which enhances viral replication. This is RNA-binding protein 38 (RBM38) from Homo sapiens (Human).